The chain runs to 217 residues: Oxygen-insensitive NAD(P)H nitroreductase (217 aa).

Residue 10 to 14 (RHSTK) coordinates FMN. NAD(+)-binding residues include K14, T41, T67, N71, K74, and R107. N71 is a binding site for FMN. FMN contacts are provided by residues 165–166 (EG) and 205–207 (KSR).

Belongs to the nitroreductase family. As to quaternary structure, homodimer. The cofactor is FMN.

Functionally, reduction of a variety of nitroaromatic compounds using NADH (and to lesser extent NADPH) as source of reducing equivalents; two electrons are transferred. The chain is Oxygen-insensitive NAD(P)H nitroreductase from Enterobacter cloacae.